Consider the following 573-residue polypeptide: MPDYEGNGEDIDNYTGGSSPPPKSRSSHGHGPTPDDYSDSKSQHSSRENEKDRDSSRSREKDRERGRDKDRDRDRDRDRGRDRDRGRDRDKDREREKDRDRHHGDRHRDRSDRREKERTRDRDDDDRHRTRDYDQQREHAKDRESRHRHRSRSRGRSEHRSRSRSRSRSKSKRISGFDMAPPTSAMLPGITAAAGQVPGTNPPIPGMFPNMFPLASGQFGALPVMPIQAMTQQATRHARRVYVGGLPAHANEQSVATFFSHVMSAIGGNTAGPGDAVVNVYINYEKKFAFVEMRSVEEASNAMALDGIIFEGAPCKVRRPSDYNPSLAATLGPSQPNPNLNLAAVGLSPGSAGGLEGPDRIFVGGLPYYFTEAQIRELLESFGPLRGFDLVKDRETGNSKGYAFCVYQDVSVTDIACAALNGIKMGDKTLTVRRANQGTTQPKPEQESVLLHAQQQIALQRLMLQPATLATKVLSLTEVISADELNDDEDYQDILEDMRTECGKFGSLVNVVIPRPSPNGEPTPGVGKVFLEYADVDSSSKARQSLNGRKFGGNQVVAVFYPENKFYEGDYDG.

Acidic residues predominate over residues M1 to D12. The segment at M1–L187 is disordered. The segment covering S38–S145 has biased composition (basic and acidic residues). Basic residues predominate over residues S161–R173. 3 consecutive RRM domains span residues R239–D322, D359–Q437, and E478–N564.

It belongs to the splicing factor SR family. Expressed in stems, leaves and apical buds.

It is found in the nucleus. Its function is as follows. Necessary for the splicing of pre-mRNA. Binds to the U -enriched regions of plant introns. The sequence is that of Splicing factor U2af large subunit B (U2AF65B) from Nicotiana plumbaginifolia (Leadwort-leaved tobacco).